Here is a 126-residue protein sequence, read N- to C-terminus: Aspartate 1-decarboxylase (126 aa).

S25 functions as the Schiff-base intermediate with substrate; via pyruvic acid in the catalytic mechanism. The residue at position 25 (S25) is a Pyruvic acid (Ser). T57 is a binding site for substrate. Residue Y58 is the Proton donor of the active site. 73 to 75 is a binding site for substrate; that stretch reads GAA.

The protein belongs to the PanD family. Heterooctamer of four alpha and four beta subunits. It depends on pyruvate as a cofactor. Post-translationally, is synthesized initially as an inactive proenzyme, which is activated by self-cleavage at a specific serine bond to produce a beta-subunit with a hydroxyl group at its C-terminus and an alpha-subunit with a pyruvoyl group at its N-terminus.

It localises to the cytoplasm. It catalyses the reaction L-aspartate + H(+) = beta-alanine + CO2. It functions in the pathway cofactor biosynthesis; (R)-pantothenate biosynthesis; beta-alanine from L-aspartate: step 1/1. Catalyzes the pyruvoyl-dependent decarboxylation of aspartate to produce beta-alanine. The protein is Aspartate 1-decarboxylase of Halorhodospira halophila (strain DSM 244 / SL1) (Ectothiorhodospira halophila (strain DSM 244 / SL1)).